Here is a 463-residue protein sequence, read N- to C-terminus: Female germline-specific tumor suppressor gld-1 (463 aa).

A compositionally biased stretch (polar residues) spans 1 to 10 (MPSCTTPTYG). Residues 1–76 (MPSCTTPTYG…RAPPPARLTL (76 aa)) are disordered. Positions 11 to 31 (VSTQLESQSSESPSRSSVMTP) are enriched in low complexity. Residues 135–205 (PTATEPIEVE…PEPAGDMISI (71 aa)) are qua1 domain; involved in homodimerization. One can recognise a KH domain in the interval 208-260 (KIYVPKNEYPDYNFVGRILGPRGMTAKQLEQDTGCKIMVRGKGSMRDKSKESA). Residues 305–336 (APEGTDELKRKQLMELAIINGTYRPMKSPNPA) form a qua2 domain; involved in RNA binding region. Residues 443–463 (NTNVSPSGASPSASSVNNTSF) are disordered. Residues 447–457 (SPSGASPSASS) show a composition bias toward low complexity.

Homodimer. Post-translationally, phosphorylated by cdk-2 which may negatively regulate its expression in distal mitotic germline cells. Undergoes proteasomal degradation in proximal oocytes following mating. Expressed in proximal and distal oocytes in female worms but is eliminated from proximal oocytes following mating.

Functionally, RNA-binding protein which recognizes the 5'-UACUCAU-3' RNA consensus sequence. Binds sequences in both the 5'coding and the 3'-UTR region of rme-2 mRNA. Binds sequences in the 3'-UTR region of cye-1 mRNA. Binds to cyb-2.1, cyb-2.2 and cyb-3 mRNA. Binds sequences in the 3'-UTR region of tra-2 mRNA. Binds to the 3' UTR of Notch receptor homolog glp-1, thereby repressing glp-1 translation in the embryo. Binding to the glp-1 3' UTR is inhibited by pos-1 binding to an overlapping binding site in the glp-1 3' UTR. Germ line-specific tumor suppressor essential for oogenesis. Controls the spatial pattern of translation of multiple oogenesis specific mRNAs (e.g. yolk receptor rme-2) by repression of translation during early meiotic prophase (leptotene to pachytene) and then derepression of translation during diplotene/ diakinesis, following its degradation. Also functions to promote the male sexual fate in the hermaphrodite germline but not the male germline. Represses translation of the vacuolar ATPase component vha-13 in the distal gonad. Functions redundantly with gld-2 to promote the initiation of meiotic development and/or inhibit stem cell proliferation. By regulating cye-1 expression, prevents entry into mitosis in meiotic germline cells. This is Female germline-specific tumor suppressor gld-1 (gld-1) from Caenorhabditis elegans.